The primary structure comprises 249 residues: Vacuolar iron transporter 1 (249 aa).

Topologically, residues 1 to 36 (MADGANDGGNPGAEEQQRLLDQHKEAHFTAGEIVRD) are cytoplasmic. A helical transmembrane segment spans residues 37 to 57 (IIIGVSDGLTVPFALAAGLSG). The Vacuolar segment spans residues 58–63 (ANASSS). Residues 64–84 (IVLTAGIAEVAAGAISMGLGG) form a helical membrane-spanning segment. Over 85–170 (YLAAKSEADN…PKRALQSAFT (86 aa)) the chain is Cytoplasmic. A cytoplasmic metal binding domain (MBD) region spans residues 90 to 165 (SEADNYAREL…LEKPDPKRAL (76 aa)). Fe cation is bound by residues glutamate 102, glutamate 105, glutamate 113, glutamate 116, methionine 149, and glutamate 153. The chain crosses the membrane as a helical span at residues 171–191 (IAIAYVLGGLVPLIPYMFIPV). Residues 192–194 (ARK) are Vacuolar-facing. Residues 195 to 215 (AVVASVILTLMALLIFGYAKG) form a helical membrane-spanning segment. Residues 216–226 (YFTDNKPFKSA) lie on the Cytoplasmic side of the membrane. A helical membrane pass occupies residues 227–247 (LQTALIGAIASAAAFGMAKAV). The Vacuolar portion of the chain corresponds to 248 to 249 (QS).

It belongs to the CCC1 family. In terms of assembly, homodimer. The dimeric interaction is mediated by both the transmembrane domains (TMDs) and the cytoplasmic metal binding domain (MBD).

The protein localises to the vacuole membrane. The catalysed reaction is Fe(2+)(in) = Fe(2+)(out). Its activity is regulated as follows. Transport of iron ions is inhibited by zinc ions. In terms of biological role, vacuolar iron transporter involved in the transfer of iron ions from the cytosol to the vacuole for intracellular iron storage. Can transport cobalt ions from the cytosol to the vacuole. The protein is Vacuolar iron transporter 1 of Eucalyptus grandis (Flooded gum).